The primary structure comprises 350 residues: Purine-binding protein BAB2_0673 (350 aa).

The first 17 residues, 1 to 17 (MVIATVAGFMLGGAAHA), serve as a signal peptide directing secretion. Residues W36, W185, and D211 each contribute to the adenine site.

Belongs to the BMP lipoprotein family.

Its function is as follows. Binds adenine and probably also other purines, such as guanine. May play a role in adenine and guanine uptake. May be part of an ABC-type uptake system for adenine and similar ligands. The chain is Purine-binding protein BAB2_0673 from Brucella abortus (strain 2308).